A 269-amino-acid chain; its full sequence is Formamidopyrimidine-DNA glycosylase (269 aa).

Residue Pro2 is the Schiff-base intermediate with DNA of the active site. Glu3 serves as the catalytic Proton donor. Lys57 serves as the catalytic Proton donor; for beta-elimination activity. Residues His90, Arg109, and Lys150 each coordinate DNA. An FPG-type zinc finger spans residues 235 to 269 (QVYGKAGEPCPECGEAIQEQKIGQRNTFYCSYCQC). The active-site Proton donor; for delta-elimination activity is the Arg259.

This sequence belongs to the FPG family. Monomer. The cofactor is Zn(2+).

It carries out the reaction Hydrolysis of DNA containing ring-opened 7-methylguanine residues, releasing 2,6-diamino-4-hydroxy-5-(N-methyl)formamidopyrimidine.. The enzyme catalyses 2'-deoxyribonucleotide-(2'-deoxyribose 5'-phosphate)-2'-deoxyribonucleotide-DNA = a 3'-end 2'-deoxyribonucleotide-(2,3-dehydro-2,3-deoxyribose 5'-phosphate)-DNA + a 5'-end 5'-phospho-2'-deoxyribonucleoside-DNA + H(+). Its function is as follows. Involved in base excision repair of DNA damaged by oxidation or by mutagenic agents. Acts as a DNA glycosylase that recognizes and removes damaged bases. Has a preference for oxidized purines, such as 7,8-dihydro-8-oxoguanine (8-oxoG). Has AP (apurinic/apyrimidinic) lyase activity and introduces nicks in the DNA strand. Cleaves the DNA backbone by beta-delta elimination to generate a single-strand break at the site of the removed base with both 3'- and 5'-phosphates. The sequence is that of Formamidopyrimidine-DNA glycosylase from Vibrio vulnificus (strain CMCP6).